We begin with the raw amino-acid sequence, 2138 residues long: Conidial yellow pigment biosynthesis polyketide synthase melA (2138 aa).

Residues 8 to 244 (YLFGDQTADF…TRVPIHGPYH (237 aa)) are N-terminal acylcarrier protein transacylase domain (SAT). One can recognise a Ketosynthase family 3 (KS3) domain in the interval 373–804 (QSKIAIIGLS…GGNTALMVED (432 aa)). Catalysis depends on for beta-ketoacyl synthase activity residues Cys545, His680, and His722. The malonyl-CoA:ACP transacylase (MAT) domain stretch occupies residues 910-1229 (FVFTGQGAQY…VSALYMAGIE (320 aa)). Ser999 serves as the catalytic For acyl/malonyl transferase activity. The segment at 1288 to 1601 (SSAAQRVLET…RKILDMALPP (314 aa)) is product template (PT) domain. The interval 1292 to 1423 (QRVLETSGDN…CNIKFFDPSP (132 aa)) is N-terminal hotdog fold. The region spanning 1292 to 1596 (QRVLETSGDN…FQGLARKILD (305 aa)) is the PKS/mFAS DH domain. Catalysis depends on His1324, which acts as the Proton acceptor; for dehydratase activity. Positions 1451-1596 (AHRMKRGMVY…FQGLARKILD (146 aa)) are C-terminal hotdog fold. Catalysis depends on Asp1509, which acts as the Proton donor; for dehydratase activity. Residues 1640-1714 (PSMATRALAI…DFKHLLAQMG (75 aa)) enclose the Carrier 1 domain. The residue at position 1674 (Ser1674) is an O-(pantetheine 4'-phosphoryl)serine. The disordered stretch occupies residues 1712-1758 (QMGPGESSDGSSSEGDMSSAASSTDLSSPNTSGLPTPANEKSMTHGL). The span at 1713-1739 (MGPGESSDGSSSEGDMSSAASSTDLSS) shows a compositional bias: low complexity. Residues 1740 to 1758 (PNTSGLPTPANEKSMTHGL) are compositionally biased toward polar residues. Residues 1759–1836 (QGQNDSMRQI…DIETTLDLKP (78 aa)) enclose the Carrier 2 domain. An O-(pantetheine 4'-phosphoryl)serine modification is found at Ser1796. Residues 1863–2135 (TQHPPATSIL…ELARFIANSM (273 aa)) are claisen cyclase domain. The active-site For Claisen cyclase activity is the Ser1953.

It catalyses the reaction 6 malonyl-CoA + acetyl-CoA + 6 H(+) = naphtopyrone YWA1 + 6 CO2 + 7 CoA + H2O. It participates in pigment biosynthesis. The protein operates within polyketide biosynthesis; heptaketide naphthopyrone YWA1 biosynthesis. Functionally, non-reducing polyketide synthase involved in the biosynthesis of a yellow conidial pigment. Probably forms the heptaketide naphthopyrene YWA1 via condensation of acetate units. The polypeptide is Conidial yellow pigment biosynthesis polyketide synthase melA (Penicillium expansum (Blue mold rot fungus)).